Here is a 194-residue protein sequence, read N- to C-terminus: Serine/threonine-protein kinase mos (194 aa).

In terms of domain architecture, Protein kinase spans 47–194 (LCLLHLLGSG…HLDLKPANIF (148 aa)). ATP-binding positions include 53 to 61 (LGSGGFGSV) and K74. D187 (proton acceptor) is an active-site residue.

Belongs to the protein kinase superfamily. Ser/Thr protein kinase family.

The enzyme catalyses L-seryl-[protein] + ATP = O-phospho-L-seryl-[protein] + ADP + H(+). It carries out the reaction L-threonyl-[protein] + ATP = O-phospho-L-threonyl-[protein] + ADP + H(+). The protein is Serine/threonine-protein kinase mos (MOS) of Atheris squamigera (Variable bush viper).